The following is a 431-amino-acid chain: Phosphoribosylamine--glycine ligase (431 aa).

Residues lysine 109–aspartate 316 form the ATP-grasp domain. Position 135–196 (valine 135–serine 196) interacts with ATP. Positions 286 and 288 each coordinate Mg(2+).

It belongs to the GARS family. The cofactor is Mg(2+). It depends on Mn(2+) as a cofactor.

It catalyses the reaction 5-phospho-beta-D-ribosylamine + glycine + ATP = N(1)-(5-phospho-beta-D-ribosyl)glycinamide + ADP + phosphate + H(+). The protein operates within purine metabolism; IMP biosynthesis via de novo pathway; N(1)-(5-phospho-D-ribosyl)glycinamide from 5-phospho-alpha-D-ribose 1-diphosphate: step 2/2. The protein is Phosphoribosylamine--glycine ligase of Xanthomonas campestris pv. campestris (strain ATCC 33913 / DSM 3586 / NCPPB 528 / LMG 568 / P 25).